We begin with the raw amino-acid sequence, 364 residues long: Methylthioribose-1-phosphate isomerase (364 aa).

Substrate is bound by residues 49–51 (RGA), Arg89, and Gln201. The active-site Proton donor is the Asp242. Residue 252–253 (NK) coordinates substrate.

The protein belongs to the eIF-2B alpha/beta/delta subunits family. MtnA subfamily.

The enzyme catalyses 5-(methylsulfanyl)-alpha-D-ribose 1-phosphate = 5-(methylsulfanyl)-D-ribulose 1-phosphate. It participates in amino-acid biosynthesis; L-methionine biosynthesis via salvage pathway; L-methionine from S-methyl-5-thio-alpha-D-ribose 1-phosphate: step 1/6. Its function is as follows. Catalyzes the interconversion of methylthioribose-1-phosphate (MTR-1-P) into methylthioribulose-1-phosphate (MTRu-1-P). In Leptospira interrogans serogroup Icterohaemorrhagiae serovar copenhageni (strain Fiocruz L1-130), this protein is Methylthioribose-1-phosphate isomerase.